The sequence spans 196 residues: Rho-related GTP-binding protein RhoB (196 aa).

GTP is bound at residue Gly-12 to Thr-19. Tyr-34 carries O-linked (GlcNAc) tyrosine; by Photorhabdus PAU_02230 glycosylation. The Effector region signature appears at Tyr-34–Tyr-42. (Microbial infection) O-linked (Glc) threonine; by C.difficile toxins TcdA and TcdB glycosylation is present at Thr-37. Asn-41 carries the post-translational modification ADP-ribosylasparagine; by botulinum toxin. Residues Asp-59–Gln-63 and Asn-117–Asp-120 contribute to the GTP site. Residue Tyr-154 is modified to Phosphotyrosine. Residues Cys-189 and Cys-192 are each lipidated (S-palmitoyl cysteine). Cys-193 carries the cysteine methyl ester modification. Cys-193 carries the S-farnesyl cysteine; in plasma membrane form lipid modification. The S-geranylgeranyl cysteine; in endosomal form moiety is linked to residue Cys-193. Positions Lys-194 to Leu-196 are cleaved as a propeptide — removed in mature form.

It belongs to the small GTPase superfamily. Rho family. In terms of assembly, binds ROCK1 and ROCK2. Also binds PKN1/PRK1. Interacts with ARGGEF3. Interacts with RTKN. Interacts with AKAP13. Interacts with RIPOR1. Post-translationally, prenylation specifies the subcellular location of RHOB. The farnesylated form is localized to the plasma membrane while the geranylgeranylated form is localized to the endosome. (Microbial infection) Glycosylated at Tyr-34 by Photorhabdus asymbiotica toxin PAU_02230. Mono-O-GlcNAcylation by PAU_02230 inhibits downstream signaling by an impaired interaction with diverse regulator and effector proteins of Rho and leads to actin disassembly. In terms of processing, (Microbial infection) Glucosylated at Thr-37 by C.difficile toxins TcdA and TcdB in the colonic epithelium. Monoglucosylation completely prevents the recognition of the downstream effector, blocking the GTPases in their inactive form, leading to actin cytoskeleton disruption.

Its subcellular location is the late endosome membrane. The protein localises to the cell membrane. It localises to the nucleus. It is found in the cleavage furrow. Mediates apoptosis in neoplastically transformed cells after DNA damage. Not essential for development but affects cell adhesion and growth factor signaling in transformed cells. Plays a negative role in tumorigenesis as deletion causes tumor formation. Involved in intracellular protein trafficking of a number of proteins. Targets PKN1 to endosomes and is involved in trafficking of the EGF receptor from late endosomes to lysosomes. Also required for stability and nuclear trafficking of AKT1/AKT which promotes endothelial cell survival during vascular development. Serves as a microtubule-dependent signal that is required for the myosin contractile ring formation during cell cycle cytokinesis. Required for genotoxic stress-induced cell death in breast cancer cells. The protein is Rho-related GTP-binding protein RhoB (RHOB) of Homo sapiens (Human).